We begin with the raw amino-acid sequence, 311 residues long: Sensor histidine kinase YcbM (311 aa).

The chain crosses the membrane as a helical span at residues 1–21; that stretch reads MTVLWVAAVIALACLNVIQFI. At 22 to 311 the chain is on the cytoplasmic side; sequence MKKKRDGNLA…FTITLKRMTY (290 aa). Positions 92 to 310 constitute a Histidine kinase domain; that stretch reads NMSHDLKTPL…AFTITLKRMT (219 aa). His95 carries the phosphohistidine; by autocatalysis modification.

Its subcellular location is the cell membrane. The catalysed reaction is ATP + protein L-histidine = ADP + protein N-phospho-L-histidine.. In terms of biological role, member of the two-component regulatory system YcbM/YcbL. Probably activates YcbL by phosphorylation. This is Sensor histidine kinase YcbM (ycbM) from Bacillus subtilis (strain 168).